Reading from the N-terminus, the 338-residue chain is Acyl-CoA:acyl-CoA alkyltransferase (338 aa).

Residues His18 and Asp56 each contribute to the Mn(2+) site. The active-site Proton acceptor is the Glu97. Cys123 functions as the Acyl-thioester intermediate in the catalytic mechanism.

The protein belongs to the thiolase-like superfamily. OleA family. In terms of assembly, homodimer. Weakly associates with the OleBCD complex.

The protein localises to the cytoplasm. It catalyses the reaction a 1,2-saturated acyl-CoA + an acyl-CoA + H2O = an (R)-2-alkyl-3-oxoalkanoate + 2 CoA + H(+). Inhibited by cerulenin. Involved in olefin biosynthesis. Catalyzes a non-decarboxylative head-to-head Claisen condensation of two acyl-CoA molecules, generating an (R)-2-alkyl-3-oxoalkanoate. Is active with fatty acyl-CoA substrates that ranged from C(8) to C(16) in length, and is the most active with palmitoyl-CoA and myristoyl-CoA. In Xanthomonas campestris pv. campestris (strain ATCC 33913 / DSM 3586 / NCPPB 528 / LMG 568 / P 25), this protein is Acyl-CoA:acyl-CoA alkyltransferase.